We begin with the raw amino-acid sequence, 172 residues long: UBA-like domain-containing protein 2 (172 aa).

Residues 118 to 130 (PPNQQPVWLPPSS) are compositionally biased toward pro residues. Positions 118–172 (PPNQQPVWLPPSSPTGHHTLHHHHHHMHPPPSWPPVSQPANGPQTPVISALHGQR) are disordered. The span at 135–145 (HTLHHHHHHMH) shows a compositional bias: basic residues.

Belongs to the UBALD family.

This Danio rerio (Zebrafish) protein is UBA-like domain-containing protein 2 (ubald2).